A 279-amino-acid chain; its full sequence is Diaminopimelate epimerase (279 aa).

Substrate-binding residues include Asn13 and Asn66. The active-site Proton donor is the Cys75. Substrate is bound by residues 76-77, Asn164, Asn197, and 215-216; these read GN and ER. The active-site Proton acceptor is the Cys224. 225–226 contacts substrate; the sequence is GT.

This sequence belongs to the diaminopimelate epimerase family. As to quaternary structure, homodimer.

Its subcellular location is the cytoplasm. The enzyme catalyses (2S,6S)-2,6-diaminopimelate = meso-2,6-diaminopimelate. The protein operates within amino-acid biosynthesis; L-lysine biosynthesis via DAP pathway; DL-2,6-diaminopimelate from LL-2,6-diaminopimelate: step 1/1. Functionally, catalyzes the stereoinversion of LL-2,6-diaminopimelate (L,L-DAP) to meso-diaminopimelate (meso-DAP), a precursor of L-lysine and an essential component of the bacterial peptidoglycan. The polypeptide is Diaminopimelate epimerase (Nostoc punctiforme (strain ATCC 29133 / PCC 73102)).